We begin with the raw amino-acid sequence, 432 residues long: Trigger factor (432 aa).

The region spanning 161 to 246 (GTRATINFVG…VVKVEARELP (86 aa)) is the PPIase FKBP-type domain.

Belongs to the FKBP-type PPIase family. Tig subfamily.

Its subcellular location is the cytoplasm. It catalyses the reaction [protein]-peptidylproline (omega=180) = [protein]-peptidylproline (omega=0). Involved in protein export. Acts as a chaperone by maintaining the newly synthesized protein in an open conformation. Functions as a peptidyl-prolyl cis-trans isomerase. The polypeptide is Trigger factor (Aliivibrio salmonicida (strain LFI1238) (Vibrio salmonicida (strain LFI1238))).